A 566-amino-acid chain; its full sequence is Sorting nexin lst-4 (566 aa).

Positions 1–61 (MAQVKAEYDF…PESYVTPYQA (61 aa)) constitute an SH3 domain. The disordered stretch occupies residues 59-179 (YQASRPPPVL…DRGSNKVNKN (121 aa)). Residues 63 to 77 (RPPPVLPPPLPPTSS) are compositionally biased toward pro residues. Positions 127–140 (DDFDDEWTDEDDEQ) are enriched in acidic residues. Residues 143 to 154 (TRPNVQSSIGSN) show a composition bias toward polar residues. A compositionally biased stretch (basic and acidic residues) spans 155–173 (SRRDLSRSHSEHGGPDRGS). The 113-residue stretch at 227 to 339 (YTCIVDKPKK…HFISCTDEKD (113 aa)) folds into the PX domain. The BAR domain occupies 362–566 (TVPHQPLDPN…KLTSLAARYD (205 aa)).

It belongs to the sorting nexin family. In terms of assembly, homodimer. Isoform d interacts (via SH3 domain) with dyn-1. As to expression, expressed in vulval precursor cells (VPCs) and apoptotic germ cells. Colocalizes with actin, dyn-1 and rab-5 in early phagosomes.

The protein resides in the cytoplasm. The protein localises to the cytoplasmic vesicle. It localises to the phagosome membrane. Its function is as follows. Involved in the signaling of vulval development by acting as a negative regulator of epidermal growth factor receptor (EGFR) signaling. Aids in phagosomal membrane tubule formation which is required for phagosomal fusion with endosomes and lysosomes. Also recruits rab-7 to phagosomes by an interaction with dyn-1. These are events leading to phagosome maturation which is a step in apoptotic cell corpse clearance. Binds phosphatidylinositol-3,4,5-trisphosphate. This chain is Sorting nexin lst-4, found in Caenorhabditis elegans.